The sequence spans 297 residues: 4-hydroxy-tetrahydrodipicolinate synthase (297 aa).

Residue Thr46 participates in pyruvate binding. Residue Tyr134 is the Proton donor/acceptor of the active site. The Schiff-base intermediate with substrate role is filled by Lys163. Ile205 contributes to the pyruvate binding site.

The protein belongs to the DapA family. In terms of assembly, homotetramer; dimer of dimers.

It is found in the cytoplasm. The enzyme catalyses L-aspartate 4-semialdehyde + pyruvate = (2S,4S)-4-hydroxy-2,3,4,5-tetrahydrodipicolinate + H2O + H(+). Its pathway is amino-acid biosynthesis; L-lysine biosynthesis via DAP pathway; (S)-tetrahydrodipicolinate from L-aspartate: step 3/4. Catalyzes the condensation of (S)-aspartate-beta-semialdehyde [(S)-ASA] and pyruvate to 4-hydroxy-tetrahydrodipicolinate (HTPA). This chain is 4-hydroxy-tetrahydrodipicolinate synthase, found in Thermoanaerobacter pseudethanolicus (strain ATCC 33223 / 39E) (Clostridium thermohydrosulfuricum).